A 1105-amino-acid chain; its full sequence is Mediator of RNA polymerase II transcription subunit 14 (1105 aa).

The segment at 28–48 is disordered; that stretch reads ASQQANGGIYRNGIGKKSHSP.

It belongs to the Mediator complex subunit 14 family. Component of the Mediator complex.

The protein resides in the nucleus. Its function is as follows. Component of the Mediator complex, a coactivator involved in the regulated transcription of nearly all RNA polymerase II-dependent genes. Mediator functions as a bridge to convey information from gene-specific regulatory proteins to the basal RNA polymerase II transcription machinery. Mediator is recruited to promoters by direct interactions with regulatory proteins and serves as a scaffold for the assembly of a functional preinitiation complex with RNA polymerase II and the general transcription factors. This chain is Mediator of RNA polymerase II transcription subunit 14 (RGR1), found in Coccidioides immitis (strain RS) (Valley fever fungus).